A 133-amino-acid polypeptide reads, in one-letter code: Large ribosomal subunit protein bL19 (133 aa).

It belongs to the bacterial ribosomal protein bL19 family.

In terms of biological role, this protein is located at the 30S-50S ribosomal subunit interface and may play a role in the structure and function of the aminoacyl-tRNA binding site. The polypeptide is Large ribosomal subunit protein bL19 (Stenotrophomonas maltophilia (strain K279a)).